The following is a 282-amino-acid chain: Hydroxyacylglutathione hydrolase-like protein (282 aa).

Zn(2+)-binding residues include H54, H56, D58, H59, H110, D134, and H173.

It belongs to the metallo-beta-lactamase superfamily. Glyoxalase II family. Requires Zn(2+) as cofactor.

In terms of biological role, hydrolase acting on ester bonds. This chain is Hydroxyacylglutathione hydrolase-like protein (HAGHL), found in Gallus gallus (Chicken).